The chain runs to 158 residues: Ribonuclease H (158 aa).

Residues Met1–Asp147 enclose the RNase H type-1 domain. Asp8, Glu52, Asp74, and Asp139 together coordinate Mg(2+).

The protein belongs to the RNase H family. As to quaternary structure, monomer. Mg(2+) is required as a cofactor.

The protein localises to the cytoplasm. It catalyses the reaction Endonucleolytic cleavage to 5'-phosphomonoester.. In terms of biological role, endonuclease that specifically degrades the RNA of RNA-DNA hybrids. The chain is Ribonuclease H from Lachnoclostridium phytofermentans (strain ATCC 700394 / DSM 18823 / ISDg) (Clostridium phytofermentans).